The primary structure comprises 96 residues: Dynein light chain roadblock-type 2 (96 aa).

Ala2 is modified (N-acetylalanine).

Belongs to the GAMAD family. In terms of assembly, homodimer. The cytoplasmic dynein 1 complex consists of two catalytic heavy chains (HCs) and a number of non-catalytic subunits presented by intermediate chains (ICs), light intermediate chains (LICs) and light chains (LCs); the composition seems to vary in respect to the IC, LIC and LC composition. The heavy chain homodimer serves as a scaffold for the probable homodimeric assembly of the respective non-catalytic subunits. The ICs and LICs bind directly to the HC dimer and the LCs assemble on the IC dimer. Interacts with DYNC1I1 and DYNC1I2. Self-associates. Interacts with DYNLRB1.

The protein localises to the cytoplasm. The protein resides in the cytoskeleton. Functionally, acts as one of several non-catalytic accessory components of the cytoplasmic dynein 1 complex that are thought to be involved in linking dynein to cargos and to adapter proteins that regulate dynein function. Cytoplasmic dynein 1 acts as a motor for the intracellular retrograde motility of vesicles and organelles along microtubules. In Bos taurus (Bovine), this protein is Dynein light chain roadblock-type 2 (DYNLRB2).